The primary structure comprises 278 residues: Protein NIF3 homolog (278 aa).

It belongs to the GTP cyclohydrolase I type 2/NIF3 family.

This is Protein NIF3 homolog from Schizosaccharomyces pombe (strain 972 / ATCC 24843) (Fission yeast).